We begin with the raw amino-acid sequence, 211 residues long: Thymidylate kinase (211 aa).

10 to 17 (GPDGAGKT) contributes to the ATP binding site.

Belongs to the thymidylate kinase family.

It carries out the reaction dTMP + ATP = dTDP + ADP. In terms of biological role, phosphorylation of dTMP to form dTDP in both de novo and salvage pathways of dTTP synthesis. This chain is Thymidylate kinase, found in Lactococcus lactis subsp. cremoris (strain SK11).